Consider the following 602-residue polypeptide: Peptide-N(4)-(N-acetyl-beta-glucosaminyl)asparagine amidase (602 aa).

The Thioredoxin domain occupies P2–G130. Positions 189, 192, 222, and 225 each coordinate Zn(2+). The active-site Nucleophile is C248. Residues H275 and D292 contribute to the active site. The region spanning D400–K602 is the PAW domain.

Belongs to the transglutaminase-like superfamily. PNGase family. Zn(2+) serves as cofactor.

The protein localises to the cytoplasm. The protein resides in the endoplasmic reticulum. The enzyme catalyses Hydrolysis of an N(4)-(acetyl-beta-D-glucosaminyl)asparagine residue in which the glucosamine residue may be further glycosylated, to yield a (substituted) N-acetyl-beta-D-glucosaminylamine and a peptide containing an aspartate residue.. In terms of biological role, specifically deglycosylates the denatured form of N-linked glycoproteins in the cytoplasm and assists their proteasome-mediated degradation. Cleaves the beta-aspartyl-glucosamine (GlcNAc) of the glycan and the amide side chain of Asn, converting Asn to Asp. Prefers proteins containing high-mannose over those bearing complex type oligosaccharides. Can recognize misfolded proteins in the endoplasmic reticulum that are exported to the cytosol to be destroyed and deglycosylate them, while it has no activity toward native proteins. Deglycosylation is a prerequisite for subsequent proteasome-mediated degradation of some, but not all, misfolded glycoproteins. Also displays oxidoreductase (thioredoxin) activity. This chain is Peptide-N(4)-(N-acetyl-beta-glucosaminyl)asparagine amidase (png-1), found in Caenorhabditis briggsae.